A 749-amino-acid polypeptide reads, in one-letter code: Cytosolic phospholipase A2 (749 aa).

The segment at 1 to 178 (MSFIDPYQHI…MKKLLGPKNS (178 aa)) is phospholipid binding. Position 2 is a phosphoserine (Ser-2). The C2 domain occupies 6–122 (PYQHIIVEHQ…KVGEKKEVPF (117 aa)). 7 residues coordinate Ca(2+): Asp-40, Thr-41, Asp-43, Asn-65, Asp-93, Ala-94, and Asn-95. Residues 140–740 (SCPDLRFSMA…SNVEARRFFN (601 aa)) form the PLA2c domain. Ser-228 (nucleophile) is an active-site residue. At Thr-268 the chain carries Phosphothreonine. The segment at 409-457 (GSQSRGSTMEEELENITTKHIVSNDSSDSDDESHEPKGTENEDAGSDYQ) is disordered. Ser-434, Ser-435, and Ser-437 each carry phosphoserine. Residue Ser-505 is modified to Phosphoserine; by MAPK. Ser-515 is modified (phosphoserine). Lys-541 participates in a covalent cross-link: Glycyl lysine isopeptide (Lys-Gly) (interchain with G-Cter in SUMO2). Catalysis depends on Asp-549, which acts as the Proton acceptor. A Glycyl lysine isopeptide (Lys-Gly) (interchain with G-Cter in SUMO2) cross-link involves residue Lys-606. Residues Ser-727 and Ser-729 each carry the phosphoserine modification.

As to quaternary structure, interacts with KAT5. Phosphorylated at both Ser-505 and Ser-727 in response to mitogenic stimuli. As to expression, expressed in various cells and tissues such as macrophages, neutrophils, fibroblasts and lung endothelium. Expressed in platelets (at protein level).

Its subcellular location is the cytoplasm. The protein localises to the golgi apparatus membrane. It is found in the nucleus envelope. The catalysed reaction is a 1,2-diacyl-sn-glycero-3-phosphocholine + H2O = a 1-acyl-sn-glycero-3-phosphocholine + a fatty acid + H(+). It carries out the reaction a 1-O-alkyl-2-acyl-sn-glycero-3-phosphocholine + H2O = a 1-O-alkyl-sn-glycero-3-phosphocholine + a fatty acid + H(+). The enzyme catalyses a 1-acyl-sn-glycero-3-phosphocholine + H2O = sn-glycerol 3-phosphocholine + a fatty acid + H(+). It catalyses the reaction 1-hexadecanoyl-2-(5Z,8Z,11Z,14Z-eicosatetraenoyl)-sn-glycero-3-phosphocholine + H2O = 1-hexadecanoyl-sn-glycero-3-phosphocholine + (5Z,8Z,11Z,14Z)-eicosatetraenoate + H(+). The catalysed reaction is 1,2-di-(5Z,8Z,11Z,14Z-eicosatetraenoyl)-sn-glycero-3-phosphocholine + H2O = 1-(5Z,8Z,11Z,14Z-eicosatetraenoyl)-sn-glycero-3-phosphocholine + (5Z,8Z,11Z,14Z)-eicosatetraenoate + H(+). It carries out the reaction 1-octadecanoyl-2-(5Z,8Z,11Z,14Z-eicosatetraenoyl)-sn-glycero-3-phosphocholine + H2O = 1-octadecanoyl-sn-glycero-3-phosphocholine + (5Z,8Z,11Z,14Z)-eicosatetraenoate + H(+). The enzyme catalyses 1-hexadecanoyl-2-(9Z,12Z-octadecadienoyl)-sn-glycero-3-phosphocholine + H2O = (9Z,12Z)-octadecadienoate + 1-hexadecanoyl-sn-glycero-3-phosphocholine + H(+). It catalyses the reaction 1-octadecanoyl-2-(9Z,12Z,15Z-octadecatrienoyl)-sn-glycero-3-phosphocholine + H2O = (9Z,12Z,15Z)-octadecatrienoate + 1-octadecanoyl-sn-glycero-3-phosphocholine + H(+). The catalysed reaction is 1-(5Z,8Z,11Z,14Z-eicosatetraenoyl)-2-hexadecanoyl-sn-glycero-3-phosphocholine + H2O = 1-(5Z,8Z,11Z,14Z-eicosatetraenoyl)-sn-glycero-3-phosphocholine + hexadecanoate + H(+). It carries out the reaction 1-O-hexadecyl-2-(5Z,8Z,11Z,14Z)-eicosatetraenoyl-sn-glycero-3-phosphocholine + H2O = 1-O-hexadecyl-sn-glycero-3-phosphocholine + (5Z,8Z,11Z,14Z)-eicosatetraenoate + H(+). The enzyme catalyses 1,2-di-(9Z-octadecenoyl)-sn-glycero-3-phospho-(1'-sn-glycerol) + H2O = 1-(9Z-octadecenoyl)-sn-glycero-3-phospho-(1'-sn-glycerol) + (9Z)-octadecenoate + H(+). It catalyses the reaction 1-octadecanoyl-2-(5Z,8Z,11Z,14Z-eicosatetraenoyl)-sn-glycero-3-phosphate + H2O = 1-octadecanoyl-sn-glycero-3-phosphate + (5Z,8Z,11Z,14Z)-eicosatetraenoate + H(+). The catalysed reaction is 1-hexadecanoyl-sn-glycero-3-phosphocholine + H2O = sn-glycerol 3-phosphocholine + hexadecanoate + H(+). It carries out the reaction 2-(prostaglandin E2)-sn-glycero-3-phosphoethanolamine + H2O = sn-glycero-3-phosphoethanolamine + prostaglandin E2 + H(+). The enzyme catalyses 2-[(15S)-hydroxy-(5Z,8Z,11Z,13E)-eicosatetraenoyl]-sn-glycero-3-phosphocholine + H2O = (15S)-hydroxy-(5Z,8Z,11Z,13E)-eicosatetraenoate + sn-glycerol 3-phosphocholine + H(+). It catalyses the reaction 2-[(15R)-hydroxy-(5Z,8Z,11Z,13E)-eicosatetraenoyl]-sn-glycero-3-phosphocholine + H2O = (15R)-hydroxy-(5Z,8Z,11Z,13E)-eicosatetraenoate + sn-glycerol 3-phosphocholine + H(+). The catalysed reaction is 2-(prostaglandin E2)-sn-glycero-3-phosphocholine + H2O = prostaglandin E2 + sn-glycerol 3-phosphocholine + H(+). It carries out the reaction 2-[(11R)-hydroxy-(5Z,8Z,12E,14Z)-eicosatetraenoyl]-sn-glycero-3-phosphocholine + H2O = (11R)-hydroxy-(5Z,8Z,12E,14Z)-eicosatetraenoate + sn-glycerol 3-phosphocholine + H(+). The enzyme catalyses 1-(5Z,8Z,11Z,14Z-eicosatetraenoyl)-2-O-hexadecyl-sn-glycero-3-phosphocholine + H2O = 2-O-hexadecyl-sn-glycero-3-phosphocholine + (5Z,8Z,11Z,14Z)-eicosatetraenoate + H(+). It catalyses the reaction 1-octadecanoyl-2-(5Z,8Z,11Z,14Z-eicosatetraenoyl)-sn-glycero-3-phosphocholine + glycerol = 1-(5Z,8Z,11Z,14Z-eicosatetraenoyl)-glycerol + 1-octadecanoyl-sn-glycero-3-phosphocholine. The catalysed reaction is 1-octadecanoyl-2-(9Z,12Z,15Z-octadecatrienoyl)-sn-glycero-3-phosphocholine + glycerol = 1-(9Z,12Z,15Z-octadecatrienoyl)-glycerol + 1-octadecanoyl-sn-glycero-3-phosphocholine. It functions in the pathway membrane lipid metabolism; glycerophospholipid metabolism. The protein operates within lipid metabolism; arachidonate metabolism. It participates in lipid metabolism; prostaglandin biosynthesis. Its pathway is lipid metabolism; leukotriene B4 biosynthesis. With respect to regulation, activated by cytosolic calcium, which is necessary for binding to membrane lipids. Activated by phosphorylation in response to mitogenic stimuli. Activated by ceramide-1-phosphate. Binding (via C2 domain) to ceramide-1-phosphate increases the affinity for membrane lipids. Can be activated by phosphoinositides in the absence of calcium. Inhibited by ANXA5 in a calcium- and substrate-dependent way. Functionally, has primarily calcium-dependent phospholipase and lysophospholipase activities, with a major role in membrane lipid remodeling and biosynthesis of lipid mediators of the inflammatory response. Plays an important role in embryo implantation and parturition through its ability to trigger prostanoid production. Preferentially hydrolyzes the ester bond of the fatty acyl group attached at sn-2 position of phospholipids (phospholipase A2 activity). Selectively hydrolyzes sn-2 arachidonoyl group from membrane phospholipids, providing the precursor for eicosanoid biosynthesis via the cyclooxygenase pathway. In an alternative pathway of eicosanoid biosynthesis, hydrolyzes sn-2 fatty acyl chain of eicosanoid lysophopholipids to release free bioactive eicosanoids. Hydrolyzes the ester bond of the fatty acyl group attached at sn-1 position of phospholipids (phospholipase A1 activity) only if an ether linkage rather than an ester linkage is present at the sn-2 position. This hydrolysis is not stereospecific. Has calcium-independent phospholipase A2 and lysophospholipase activities in the presence of phosphoinositides. Has O-acyltransferase activity. Catalyzes the transfer of fatty acyl chains from phospholipids to a primary hydroxyl group of glycerol (sn-1 or sn-3), potentially contributing to monoacylglycerol synthesis. In Homo sapiens (Human), this protein is Cytosolic phospholipase A2 (PLA2G4A).